The chain runs to 219 residues: MSADKVTLADLPLRDNLRGKSPYGAPQLQVPVRLNTNENPHPPSKALVDDVAASVREAAAELHRYPDRDAVALRTDLAAYLTAATGVRLGVENLWAANGSNEILQQLLQAFGGPGRTAIGFVPSYSMHPIISDGTQTEWLQASRAEDFGLDIDVAVSAVTERKPDVVFVTSPNNPSGQSVPLDDLRRVLDAMQGGILIVDEAYGEFSSQPSAVALLDDY.

It belongs to the class-II pyridoxal-phosphate-dependent aminotransferase family. Histidinol-phosphate aminotransferase subfamily. As to quaternary structure, homodimer. Requires pyridoxal 5'-phosphate as cofactor.

It carries out the reaction L-histidinol phosphate + 2-oxoglutarate = 3-(imidazol-4-yl)-2-oxopropyl phosphate + L-glutamate. It functions in the pathway amino-acid biosynthesis; L-histidine biosynthesis; L-histidine from 5-phospho-alpha-D-ribose 1-diphosphate: step 7/9. The polypeptide is Histidinol-phosphate aminotransferase (hisC) (Mycolicibacterium smegmatis (Mycobacterium smegmatis)).